We begin with the raw amino-acid sequence, 304 residues long: Aspartate carbamoyltransferase catalytic subunit (304 aa).

Carbamoyl phosphate is bound by residues Arg49 and Thr50. Lys77 serves as a coordination point for L-aspartate. Residues Arg99, His127, and Gln130 each coordinate carbamoyl phosphate. L-aspartate-binding residues include Arg160 and Arg211. Ala250 and Pro251 together coordinate carbamoyl phosphate.

Belongs to the aspartate/ornithine carbamoyltransferase superfamily. ATCase family. Heterododecamer (2C3:3R2) of six catalytic PyrB chains organized as two trimers (C3), and six regulatory PyrI chains organized as three dimers (R2).

The catalysed reaction is carbamoyl phosphate + L-aspartate = N-carbamoyl-L-aspartate + phosphate + H(+). It participates in pyrimidine metabolism; UMP biosynthesis via de novo pathway; (S)-dihydroorotate from bicarbonate: step 2/3. In terms of biological role, catalyzes the condensation of carbamoyl phosphate and aspartate to form carbamoyl aspartate and inorganic phosphate, the committed step in the de novo pyrimidine nucleotide biosynthesis pathway. This chain is Aspartate carbamoyltransferase catalytic subunit, found in Bacillus velezensis (strain DSM 23117 / BGSC 10A6 / LMG 26770 / FZB42) (Bacillus amyloliquefaciens subsp. plantarum).